The chain runs to 265 residues: Aquaporin-5 (265 aa).

At 1–12 (MKKEVCSAAFLK) the chain is on the cytoplasmic side. Residues 13–33 (AVFAEFLATLIFVFFGLGSAL) form a helical membrane-spanning segment. Topologically, residues 34–39 (KWPSAM) are extracellular. The helical transmembrane segment at 40-60 (PSVLQISLAFGLAIGTMAQAL) threads the bilayer. The Cytoplasmic segment spans residues 61-65 (GPVSG). The discontinuously helical intramembrane region spans 66–74 (GHMNPAITL). Residues 69–71 (NPA) carry the NPA 1 motif. At 75–87 (ALLVGNQISLLRA) the chain is on the cytoplasmic side. Residues 88-108 (VFYLVAQLVGAIAGAAILYGL) traverse the membrane as a helical segment. Topologically, residues 109–126 (APYNARSNLAVNALNNNT) are extracellular. 2 N-linked (GlcNAc...) asparagine glycosylation sites follow: Asn-124 and Asn-125. A helical membrane pass occupies residues 127–147 (TAGQAVVAEMILTFQLALCVF). The Cytoplasmic segment spans residues 148 to 158 (SSTDSRRTSPV). The chain crosses the membrane as a helical span at residues 159–179 (GSPALSIGLSVTLGHLVGIYF). Position 180 (Thr-180) is a topological domain, extracellular. An intramembrane region (discontinuously helical) is located at residues 181-191 (GCSMNPARSFG). Residues 185–187 (NPA) carry the NPA 2 motif. Over 192–203 (PAVIMSRFSSAH) the chain is Extracellular. The helical transmembrane segment at 204-224 (WVFWVGPIVGAATAAIIYFYL) threads the bilayer. At 225–265 (LFPHSLSLSDRVAILKGTYEPDEDWEESQEERKKTMELTAH) the chain is on the cytoplasmic side.

Belongs to the MIP/aquaporin (TC 1.A.8) family. As to quaternary structure, homotetramer; each monomer provides an independent water pore. Interacts with TRPV4; the interaction is probably indirect and regulates TRPV4 activation by hypotonicity.

The protein resides in the apical cell membrane. It is found in the cell membrane. It localises to the cytoplasmic vesicle membrane. It catalyses the reaction H2O(in) = H2O(out). Its function is as follows. Aquaporins form homotetrameric transmembrane channels, with each monomer independently mediating water transport across the plasma membrane along its osmotic gradient. Plays an important role in fluid secretion in salivary glands. Required for TRPV4 activation by hypotonicity. Together with TRPV4, controls regulatory volume decrease in salivary epithelial cells. Seems to play a redundant role in water transport in the eye, lung and in sweat glands. The protein is Aquaporin-5 of Ovis aries (Sheep).